A 660-amino-acid polypeptide reads, in one-letter code: tRNA 5-methylaminomethyl-2-thiouridine biosynthesis bifunctional protein MnmC (660 aa).

Residues 1-241 form a tRNA (mnm(5)s(2)U34)-methyltransferase region; that stretch reads MNDHPAQDAF…KREILRGHLQ (241 aa). An FAD-dependent cmnm(5)s(2)U34 oxidoreductase region spans residues 268–660; sequence IGAGLAGCAT…FLLRKLIRGT (393 aa).

It in the N-terminal section; belongs to the methyltransferase superfamily. tRNA (mnm(5)s(2)U34)-methyltransferase family. The protein in the C-terminal section; belongs to the DAO family. It depends on FAD as a cofactor.

The protein resides in the cytoplasm. The catalysed reaction is 5-aminomethyl-2-thiouridine(34) in tRNA + S-adenosyl-L-methionine = 5-methylaminomethyl-2-thiouridine(34) in tRNA + S-adenosyl-L-homocysteine + H(+). Its function is as follows. Catalyzes the last two steps in the biosynthesis of 5-methylaminomethyl-2-thiouridine (mnm(5)s(2)U) at the wobble position (U34) in tRNA. Catalyzes the FAD-dependent demodification of cmnm(5)s(2)U34 to nm(5)s(2)U34, followed by the transfer of a methyl group from S-adenosyl-L-methionine to nm(5)s(2)U34, to form mnm(5)s(2)U34. The sequence is that of tRNA 5-methylaminomethyl-2-thiouridine biosynthesis bifunctional protein MnmC from Stutzerimonas stutzeri (strain A1501) (Pseudomonas stutzeri).